The sequence spans 316 residues: Olfactory receptor 8J1 (316 aa).

Topologically, residues 1 to 25 (MAPENFTRVTEFILTGVSSCPELQI) are extracellular. Asparagine 5 is a glycosylation site (N-linked (GlcNAc...) asparagine). A helical membrane pass occupies residues 26-46 (PLFLVFLVLYGLTMAGNLGII). The Cytoplasmic segment spans residues 47 to 54 (TLTSVDSR). The chain crosses the membrane as a helical span at residues 55–75 (LQTPMYFFLQHLALINLGNST). The Extracellular segment spans residues 76-99 (VIAPKMLINFLVKKKTTSFYECAT). Cysteines 97 and 189 form a disulfide. Residues 100–120 (QLGGFLFFIVSEVIMLALMAY) form a helical membrane-spanning segment. Residues 121-139 (DRYVAICNPLLYMVVVSRR) are Cytoplasmic-facing. The helical transmembrane segment at 140–160 (LCLLLVSLTYLYGFSTAIVVS) threads the bilayer. Topologically, residues 161-197 (SYVFSVSYCSSNIINHFYCDNVPLLALSCSDTYLPET) are extracellular. The chain crosses the membrane as a helical span at residues 198–217 (VVFISAATNVVGSLIIVLVS). Topologically, residues 218 to 237 (YFNIVLSILKICSSEGRKKA) are cytoplasmic. Residues 238–258 (FSTCASHMMAVTIFYGTLLFM) traverse the membrane as a helical segment. Residues 259-272 (YVQPRSNHSLDTDD) lie on the Extracellular side of the membrane. A helical membrane pass occupies residues 273 to 293 (KMASVFYTLVIPMLNPLIYSL). Over 294–316 (RNKDVKTALQRFMTNLCYSFKTM) the chain is Cytoplasmic.

Belongs to the G-protein coupled receptor 1 family.

It localises to the cell membrane. Odorant receptor. This chain is Olfactory receptor 8J1 (OR8J1), found in Homo sapiens (Human).